The following is a 318-amino-acid chain: Mitochondrial thiamine pyrophosphate carrier (318 aa).

Solcar repeat units follow at residues 13 to 106 (ISNV…LTEL), 116 to 202 (RDFS…LKRA), and 214 to 309 (NGNF…FCNF). Residues 19 to 39 (AVAGSVSGLVTRVLISPLDVI) traverse the membrane as a helical segment. S51 bears the Phosphoserine mark. 4 helical membrane-spanning segments follow: residues 87-107 (LLSIGYGAVQFLSFEALTELV), 122-142 (FLCGGLSACVATLAVHPVDVL), 173-193 (VFYKGLNPTLIAIFPYAGFQF), and 220-240 (LLCGSGAGVISKTLTYPLDLF). The short motif at 241-246 (KKRLQV) is the Substrate recognition element. The helical transmembrane segment at 293-313 (ALSTGLVFFWYELFCNFFHHM) threads the bilayer.

This sequence belongs to the mitochondrial carrier (TC 2.A.29) family.

Its subcellular location is the mitochondrion membrane. The catalysed reaction is thiamine phosphate(out) + thiamine diphosphate(in) = thiamine phosphate(in) + thiamine diphosphate(out). Mitochondrial transporter mediating uptake of thiamine diphosphate into mitochondria. It is not clear if the antiporter activity is affected by the membrane potential or by the proton electrochemical gradient. The chain is Mitochondrial thiamine pyrophosphate carrier (SLC25A19) from Bos taurus (Bovine).